A 525-amino-acid polypeptide reads, in one-letter code: GMP synthase [glutamine-hydrolyzing] (525 aa).

The Glutamine amidotransferase type-1 domain maps to Lys-8–Asn-207. The active-site Nucleophile is the Cys-85. Residues His-181 and Glu-183 contribute to the active site. One can recognise a GMPS ATP-PPase domain in the interval Trp-208–Arg-400. Residue Ser-235–Ser-241 participates in ATP binding.

In terms of assembly, homodimer.

It catalyses the reaction XMP + L-glutamine + ATP + H2O = GMP + L-glutamate + AMP + diphosphate + 2 H(+). It participates in purine metabolism; GMP biosynthesis; GMP from XMP (L-Gln route): step 1/1. Its function is as follows. Catalyzes the synthesis of GMP from XMP. This chain is GMP synthase [glutamine-hydrolyzing], found in Shewanella piezotolerans (strain WP3 / JCM 13877).